Reading from the N-terminus, the 157-residue chain is Crossover junction endodeoxyribonuclease RuvC (157 aa).

Catalysis depends on residues D7, E67, and D139. Residues D7, E67, and D139 each coordinate Mg(2+).

Belongs to the RuvC family. In terms of assembly, homodimer which binds Holliday junction (HJ) DNA. The HJ becomes 2-fold symmetrical on binding to RuvC with unstacked arms; it has a different conformation from HJ DNA in complex with RuvA. In the full resolvosome a probable DNA-RuvA(4)-RuvB(12)-RuvC(2) complex forms which resolves the HJ. Mg(2+) serves as cofactor.

It localises to the cytoplasm. The enzyme catalyses Endonucleolytic cleavage at a junction such as a reciprocal single-stranded crossover between two homologous DNA duplexes (Holliday junction).. The RuvA-RuvB-RuvC complex processes Holliday junction (HJ) DNA during genetic recombination and DNA repair. Endonuclease that resolves HJ intermediates. Cleaves cruciform DNA by making single-stranded nicks across the HJ at symmetrical positions within the homologous arms, yielding a 5'-phosphate and a 3'-hydroxyl group; requires a central core of homology in the junction. The consensus cleavage sequence is 5'-(A/T)TT(C/G)-3'. Cleavage occurs on the 3'-side of the TT dinucleotide at the point of strand exchange. HJ branch migration catalyzed by RuvA-RuvB allows RuvC to scan DNA until it finds its consensus sequence, where it cleaves and resolves the cruciform DNA. In Prochlorococcus marinus (strain MIT 9301), this protein is Crossover junction endodeoxyribonuclease RuvC.